The sequence spans 483 residues: Glutamyl-tRNA(Gln) amidotransferase subunit A (483 aa).

Residues Lys-75 and Ser-150 each act as charge relay system in the active site. Ser-174 (acyl-ester intermediate) is an active-site residue.

It belongs to the amidase family. GatA subfamily. Heterotrimer of A, B and C subunits.

The catalysed reaction is L-glutamyl-tRNA(Gln) + L-glutamine + ATP + H2O = L-glutaminyl-tRNA(Gln) + L-glutamate + ADP + phosphate + H(+). In terms of biological role, allows the formation of correctly charged Gln-tRNA(Gln) through the transamidation of misacylated Glu-tRNA(Gln) in organisms which lack glutaminyl-tRNA synthetase. The reaction takes place in the presence of glutamine and ATP through an activated gamma-phospho-Glu-tRNA(Gln). This Legionella pneumophila (strain Paris) protein is Glutamyl-tRNA(Gln) amidotransferase subunit A.